Reading from the N-terminus, the 194-residue chain is Der GTPase-activating protein YihI (194 aa).

Positions 1–87 (MSRQKKSRNI…RDPRLGSRKK (87 aa)) are disordered. Positions 37-48 (TRYELDAKARED) are enriched in basic and acidic residues.

The protein belongs to the YihI family. In terms of assembly, interacts with Der.

Functionally, a GTPase-activating protein (GAP) that modifies Der/EngA GTPase function. May play a role in ribosome biogenesis. This chain is Der GTPase-activating protein YihI, found in Mannheimia succiniciproducens (strain KCTC 0769BP / MBEL55E).